The primary structure comprises 412 residues: Mannose-1-phosphate guanylyltransferase regulatory subunit alpha (412 aa).

The interval 6-259 (TKAIILVGGP…VGFWRQIKNA (254 aa)) is substrate-binding domain. Residues E88 and Q255 each contribute to the GDP-alpha-D-mannose site. Residues 281-412 (LKKGNNIIGN…DRNYNNEIIL (132 aa)) form a hexapeptide repeat domain region.

The protein belongs to the transferase hexapeptide repeat family. Component of the GMPPA-GMPPB mannose-1-phosphate guanylyltransferase complex composed of 4 gmppA subunits and 8 gmppB subunits; the complex is organized into three layers, a central layer made up of 2 gmppA dimers sandwiched between two layers each made up of 2 gmppB dimers.

In terms of biological role, regulatory subunit of the GMPPA-GMPPB mannose-1-phosphate guanylyltransferase complex; reduces the catalytic activity of GMPPB when part of the complex. Mediates allosteric feedback inhibition of GMPPB catalytic activity upon binding GDP-alpha-D-mannose. Together with GMPPB regulates GDP-alpha-D-mannose levels. This chain is Mannose-1-phosphate guanylyltransferase regulatory subunit alpha (gmppA), found in Dictyostelium discoideum (Social amoeba).